Here is a 594-residue protein sequence, read N- to C-terminus: Cytoplasmic polyadenylation element-binding protein 1 (594 aa).

Residues 1–33 form a disordered region; the sequence is MQHQVKACGDSKSTTRSLQGNRRSGAASLKKPS. Over residues 11 to 22 the composition is skewed to polar residues; the sequence is SKSTTRSLQGNR. RRM domains follow at residues 257–364 and 381–452; these read RKVF…PWRL and RTVF…HAET. Residues 519 to 560 form a disordered region; that stretch reads TGDQTRILPRPPHHQSSHYSPRSHQMMNHDSMESSNQSRGNT. Polar residues predominate over residues 535–560; that stretch reads SHYSPRSHQMMNHDSMESSNQSRGNT.

As to quaternary structure, interacts with fbf-1.

Its function is as follows. Cytoplasmic polyadenylation element binding protein that binds to and regulates the translation of specific mRNAs. Essential for progression through meiosis. Involved in spermatogenesis. The protein is Cytoplasmic polyadenylation element-binding protein 1 (cpb-1) of Caenorhabditis remanei (Caenorhabditis vulgaris).